We begin with the raw amino-acid sequence, 107 residues long: Integration host factor subunit alpha (107 aa).

Belongs to the bacterial histone-like protein family. In terms of assembly, heterodimer of an alpha and a beta chain.

In terms of biological role, this protein is one of the two subunits of integration host factor, a specific DNA-binding protein that functions in genetic recombination as well as in transcriptional and translational control. The protein is Integration host factor subunit alpha of Brucella suis (strain ATCC 23445 / NCTC 10510).